Consider the following 318-residue polypeptide: Putative olfactory receptor 2W6 (318 aa).

The Extracellular segment spans residues 1-31 (MGFYHVGQAAFELLTSSFILVGFSDRPHLEL). Residues 32-52 (IVFVVVLIFYLLTLLGNMTIV) traverse the membrane as a helical segment. Residues 53–63 (LLSALDSRLHT) lie on the Cytoplasmic side of the membrane. The helical transmembrane segment at 64–84 (PMYFFLANLSFLDMCFTTGSI) threads the bilayer. The Extracellular portion of the chain corresponds to 85-103 (PQMLYNLWGPDKTISYVGC). The cysteines at positions 103 and 185 are disulfide-linked. Residues 104–124 (AIQLYFVLALGGVECVLLAVM) form a helical membrane-spanning segment. At 125–145 (AYDRYAAVCKPLHYTIIMHPR) the chain is on the cytoplasmic side. Residues 146–166 (LCGQLASVAWLSGFGNSLIMA) form a helical membrane-spanning segment. Over 167 to 202 (PQTLMLPRCGHRRVDHFLCEMPALIGMACVDTMMLE) the chain is Extracellular. A helical membrane pass occupies residues 203-223 (ALAFALAIFIILAPLILILIS). Residues 224 to 245 (YGYVGGTVLRIKSAAGRKKAFN) are Cytoplasmic-facing. Residues 246–266 (TCSSHLIVVSLFYGTIIYMYL) traverse the membrane as a helical segment. The Extracellular segment spans residues 267–277 (QPANTYSQDQG). A helical membrane pass occupies residues 278–298 (KFLTLFYTIVTPSVNPLIYTL). The Cytoplasmic portion of the chain corresponds to 299 to 318 (RNKDVKEAMKKVLGKGSAEI).

The protein belongs to the G-protein coupled receptor 1 family.

Its subcellular location is the cell membrane. In terms of biological role, odorant receptor. This is Putative olfactory receptor 2W6 (OR2W6P) from Homo sapiens (Human).